Here is a 567-residue protein sequence, read N- to C-terminus: Urease subunit alpha (567 aa).

The region spanning 129 to 567 is the Urease domain; sequence GGIDSHIHFI…LPLAQRYFLF (439 aa). Ni(2+) is bound by residues H134, H136, and K217. K217 carries the N6-carboxylysine modification. H219 contributes to the substrate binding site. Ni(2+) is bound by residues H246 and H272. H320 functions as the Proton donor in the catalytic mechanism. D360 is a binding site for Ni(2+).

The protein belongs to the metallo-dependent hydrolases superfamily. Urease alpha subunit family. Heterotrimer of UreA (gamma), UreB (beta) and UreC (alpha) subunits. Three heterotrimers associate to form the active enzyme. It depends on Ni cation as a cofactor. In terms of processing, carboxylation allows a single lysine to coordinate two nickel ions.

Its subcellular location is the cytoplasm. It catalyses the reaction urea + 2 H2O + H(+) = hydrogencarbonate + 2 NH4(+). Its pathway is nitrogen metabolism; urea degradation; CO(2) and NH(3) from urea (urease route): step 1/1. The chain is Urease subunit alpha from Pseudomonas putida (strain W619).